Here is a 106-residue protein sequence, read N- to C-terminus: Probable insulin-like peptide beta-type 1 (106 aa).

The first 19 residues, 1 to 19 (MFSFFTYFLLSALLLSASC), serve as a signal peptide directing secretion. The propeptide at 20 to 51 (RQPSMDTSKADRILREIEMETELENQLSRARR) is removed; by convertase egl-3. Intrachain disulfides connect Cys60–Cys89, Cys72–Cys102, Cys76–Cys103, and Cys88–Cys93.

It belongs to the insulin family. As to expression, expressed by ASI and ASJ sensory neurons and weakly by ventral cord motor neurons.

It is found in the secreted. Probable insulin-like peptide which negatively regulates synapse development at the neuromuscular junctions. Probably acts as a daf-2/InsR agonist ligand to prevent dauer formation under optimal environmental conditions. This is Probable insulin-like peptide beta-type 1 (ins-4) from Caenorhabditis elegans.